The following is a 1890-amino-acid chain: Putative aminopeptidase-2 (1890 aa).

The first 20 residues, 1–20, serve as a signal peptide directing secretion; that stretch reads MRRKLLLLLCFIGLFSLIST. The N-linked (GlcNAc...) asparagine glycan is linked to Asn-110. Substrate is bound by residues Glu-220 and 354 to 358; that span reads GAMEN. Zn(2+) is bound at residue His-390. Glu-391 functions as the Proton acceptor in the catalytic mechanism. 2 residues coordinate Zn(2+): His-394 and Glu-413. N-linked (GlcNAc...) asparagine glycosylation is found at Asn-534, Asn-581, Asn-785, Asn-803, Asn-914, Asn-1024, and Asn-1094. Glu-1143 is a binding site for substrate. Asn-1245 is a glycosylation site (N-linked (GlcNAc...) asparagine). 1280-1284 contributes to the substrate binding site; that stretch reads GAMEN. His-1316 contacts Zn(2+). Residue Glu-1317 is the Proton acceptor of the active site. Zn(2+) is bound by residues His-1320 and Glu-1339. Asn-1451, Asn-1521, Asn-1826, and Asn-1841 each carry an N-linked (GlcNAc...) asparagine glycan.

The protein belongs to the peptidase M1 family. Zn(2+) is required as a cofactor.

Its function is as follows. Putative aminopeptidase which plays a role in oocyte maturation. This is Putative aminopeptidase-2 from Caenorhabditis elegans.